Consider the following 89-residue polypeptide: Dynein light chain 1, cytoplasmic (89 aa).

It belongs to the dynein light chain family. As to quaternary structure, interacts with mett-10; the interaction is direct, and is required for the nuclear localization of mett-10. Component of a dynein-regulating complex composed of at least bicd-1, dlc-1 and egal-1. Interacts with egal-1 and unc-83. Interacts with fbf-2. As to expression, broadly expressed in tissues including the intestine, body wall muscles, germs cells, oocytes, the rectal valve and cells in the head.

It is found in the cytoplasm. It localises to the cytoskeleton. The protein resides in the nucleus envelope. The protein localises to the cytoplasmic granule. Its function is as follows. Acts as a non-catalytic accessory component of a dynein complex. Part of a complex with bicd-1 and egal-1, which is recruited to the nuclear envelope by unc-83, where in turn, it recruits dynein to the nuclear surface and regulates nuclear migrations in hypodermal precursor cells. Probably within a dynein motor complex, plays a role in the cell fate specification of the germline and oogenesis. In particular, it inhibits germ cell proliferation. Regulates the function and localization of the RNA-binding protein fbf-2 in the germline. Plays a role in mitotic and meiotic processes. Involved in the pairing of homologous chromosomes. Independently of its dynein-mediated functions, plays a role in germ cell apoptosis. The protein is Dynein light chain 1, cytoplasmic of Caenorhabditis elegans.